Reading from the N-terminus, the 328-residue chain is 5,10-methylenetetrahydromethanopterin reductase (328 aa).

Belongs to the mer family.

It localises to the cytoplasm. It catalyses the reaction 5-methyl-5,6,7,8-tetrahydromethanopterin + oxidized coenzyme F420-(gamma-L-Glu)(n) + H(+) = 5,10-methylenetetrahydromethanopterin + reduced coenzyme F420-(gamma-L-Glu)(n). Its pathway is one-carbon metabolism; methanogenesis from CO(2); methyl-coenzyme M from 5,10-methylene-5,6,7,8-tetrahydromethanopterin: step 1/2. Catalyzes the reversible reduction of methylene-H(4)MPT to methyl-H(4)MPT. This is 5,10-methylenetetrahydromethanopterin reductase from Methanosarcina acetivorans (strain ATCC 35395 / DSM 2834 / JCM 12185 / C2A).